A 211-amino-acid chain; its full sequence is Uracil phosphoribosyltransferase (211 aa).

5-phospho-alpha-D-ribose 1-diphosphate is bound by residues arginine 79, arginine 104, and 131–139 (DPMLATGGS). Uracil is bound by residues isoleucine 196 and 201-203 (GDA). Aspartate 202 serves as a coordination point for 5-phospho-alpha-D-ribose 1-diphosphate.

Belongs to the UPRTase family. Mg(2+) serves as cofactor.

The enzyme catalyses UMP + diphosphate = 5-phospho-alpha-D-ribose 1-diphosphate + uracil. Its pathway is pyrimidine metabolism; UMP biosynthesis via salvage pathway; UMP from uracil: step 1/1. Its activity is regulated as follows. Allosterically activated by GTP. In terms of biological role, catalyzes the conversion of uracil and 5-phospho-alpha-D-ribose 1-diphosphate (PRPP) to UMP and diphosphate. The sequence is that of Uracil phosphoribosyltransferase from Limosilactobacillus reuteri (strain DSM 20016) (Lactobacillus reuteri).